The sequence spans 296 residues: ATP synthase gamma chain (296 aa).

Residues 194–216 (IPASAGQAANDNAGSDQPAGDYE) are disordered.

It belongs to the ATPase gamma chain family. As to quaternary structure, F-type ATPases have 2 components, CF(1) - the catalytic core - and CF(0) - the membrane proton channel. CF(1) has five subunits: alpha(3), beta(3), gamma(1), delta(1), epsilon(1). CF(0) has three main subunits: a, b and c.

The protein resides in the cell inner membrane. Its function is as follows. Produces ATP from ADP in the presence of a proton gradient across the membrane. The gamma chain is believed to be important in regulating ATPase activity and the flow of protons through the CF(0) complex. The protein is ATP synthase gamma chain of Acidiphilium cryptum (strain JF-5).